The primary structure comprises 180 residues: Large ribosomal subunit protein uL6 (180 aa).

The protein belongs to the universal ribosomal protein uL6 family. Part of the 50S ribosomal subunit.

In terms of biological role, this protein binds to the 23S rRNA, and is important in its secondary structure. It is located near the subunit interface in the base of the L7/L12 stalk, and near the tRNA binding site of the peptidyltransferase center. This chain is Large ribosomal subunit protein uL6, found in Mesoplasma florum (strain ATCC 33453 / NBRC 100688 / NCTC 11704 / L1) (Acholeplasma florum).